Here is a 642-residue protein sequence, read N- to C-terminus: Threonine--tRNA ligase (642 aa).

The region spanning 1–58 (MQVAGKELEVQQGALCGEVLKEALSKKQFKNVVVAKCGDTLLDLTTTVPADCTDLEPV) is the TGS domain. The interval 239 to 530 (DHRKLGTQLD…LLEHTGGALP (292 aa)) is catalytic. Zn(2+) is bound by residues C331, H382, and H507.

Belongs to the class-II aminoacyl-tRNA synthetase family. In terms of assembly, homodimer. Zn(2+) is required as a cofactor.

Its subcellular location is the cytoplasm. It carries out the reaction tRNA(Thr) + L-threonine + ATP = L-threonyl-tRNA(Thr) + AMP + diphosphate + H(+). Functionally, catalyzes the attachment of threonine to tRNA(Thr) in a two-step reaction: L-threonine is first activated by ATP to form Thr-AMP and then transferred to the acceptor end of tRNA(Thr). Also edits incorrectly charged L-seryl-tRNA(Thr). The chain is Threonine--tRNA ligase from Maridesulfovibrio salexigens (strain ATCC 14822 / DSM 2638 / NCIMB 8403 / VKM B-1763) (Desulfovibrio salexigens).